The primary structure comprises 282 residues: Farnesyl diphosphate synthase (282 aa).

The isopentenyl diphosphate site is built by Lys-45, Arg-48, and His-77. Residues Asp-84 and Asp-90 each coordinate Mg(2+). Arg-95 provides a ligand contact to (2E)-geranyl diphosphate. Arg-96 contacts isopentenyl diphosphate. (2E)-geranyl diphosphate contacts are provided by Lys-181, Thr-182, and Gln-220.

It belongs to the FPP/GGPP synthase family. Mg(2+) serves as cofactor.

It localises to the cytoplasm. It catalyses the reaction isopentenyl diphosphate + (2E)-geranyl diphosphate = (2E,6E)-farnesyl diphosphate + diphosphate. The chain is Farnesyl diphosphate synthase (ispA) from Buchnera aphidicola subsp. Acyrthosiphon pisum (strain APS) (Acyrthosiphon pisum symbiotic bacterium).